A 509-amino-acid chain; its full sequence is Zinc finger CCCH-type with G patch domain-containing protein (509 aa).

A C3H1-type zinc finger spans residues 155-178 (PCNYYLEGECRFDEIRCRYSHGAL). The tract at residues 253–277 (EEDGLTSEDSSSSPHDESSDEIDSD) is disordered. Residues 310–356 (TRGIGSKLMEKMGYIHGTGLGSEGRGIVTPVSAQILPQGRSLDACME) form the G-patch domain. Residues 409–430 (GGESRHQGDQAAKKAKTNDLQQ) are disordered. The segment covering 411–420 (ESRHQGDQAA) has biased composition (basic and acidic residues).

It localises to the nucleus. Functionally, transcription repressor. The chain is Zinc finger CCCH-type with G patch domain-containing protein from Drosophila persimilis (Fruit fly).